The sequence spans 319 residues: 4-hydroxy-3-methylbut-2-enyl diphosphate reductase (319 aa).

C18 is a [4Fe-4S] cluster binding site. H47 and H81 together coordinate (2E)-4-hydroxy-3-methylbut-2-enyl diphosphate. Residues H47 and H81 each contribute to the dimethylallyl diphosphate site. The isopentenyl diphosphate site is built by H47 and H81. Residue C103 coordinates [4Fe-4S] cluster. H131 is a (2E)-4-hydroxy-3-methylbut-2-enyl diphosphate binding site. H131 provides a ligand contact to dimethylallyl diphosphate. H131 is a binding site for isopentenyl diphosphate. E133 serves as the catalytic Proton donor. A (2E)-4-hydroxy-3-methylbut-2-enyl diphosphate-binding site is contributed by T172. C202 contributes to the [4Fe-4S] cluster binding site. Residues S230, S231, N232, and S275 each coordinate (2E)-4-hydroxy-3-methylbut-2-enyl diphosphate. Dimethylallyl diphosphate is bound by residues S230, S231, N232, and S275. Positions 230, 231, 232, and 275 each coordinate isopentenyl diphosphate.

The protein belongs to the IspH family. [4Fe-4S] cluster serves as cofactor.

It catalyses the reaction isopentenyl diphosphate + 2 oxidized [2Fe-2S]-[ferredoxin] + H2O = (2E)-4-hydroxy-3-methylbut-2-enyl diphosphate + 2 reduced [2Fe-2S]-[ferredoxin] + 2 H(+). The enzyme catalyses dimethylallyl diphosphate + 2 oxidized [2Fe-2S]-[ferredoxin] + H2O = (2E)-4-hydroxy-3-methylbut-2-enyl diphosphate + 2 reduced [2Fe-2S]-[ferredoxin] + 2 H(+). Its pathway is isoprenoid biosynthesis; dimethylallyl diphosphate biosynthesis; dimethylallyl diphosphate from (2E)-4-hydroxy-3-methylbutenyl diphosphate: step 1/1. The protein operates within isoprenoid biosynthesis; isopentenyl diphosphate biosynthesis via DXP pathway; isopentenyl diphosphate from 1-deoxy-D-xylulose 5-phosphate: step 6/6. Catalyzes the conversion of 1-hydroxy-2-methyl-2-(E)-butenyl 4-diphosphate (HMBPP) into a mixture of isopentenyl diphosphate (IPP) and dimethylallyl diphosphate (DMAPP). Acts in the terminal step of the DOXP/MEP pathway for isoprenoid precursor biosynthesis. This Beijerinckia indica subsp. indica (strain ATCC 9039 / DSM 1715 / NCIMB 8712) protein is 4-hydroxy-3-methylbut-2-enyl diphosphate reductase.